We begin with the raw amino-acid sequence, 435 residues long: MPVTHRKSDASDMNSDTSPSCRLRAFSRGGSLESRSSSSRSRSFTLDDESLKYLTHEEKDVLLFFEETIDSLDEDFEEPVLCDGGVCCLCSPSLEESTSSPSEPEDVIDLVQPAPGAGEAEGLPEGTQAAGPAPAGKEHRKQDAETPPPPDPPAPETLLAPPPLPSTPDPPRRELRAPSPPVEHPRLLRSVPTPLVMAQKISERMAGNEALSPTSPFREGRPGEWRTPAARGPRSGDPGPGPSHPAQPKAPRFPSNIIVTNGAAREPRRTLSRAAVSVQERRAQVLATIHGHAGAFPAAGDAGEGAPGGGSSPERVARGRGLPGPAESLRAGGQAPRGPALANGFPSAHEALKSAPSSFAPAGKSLCFRPGPALPSTRARQSFPGPRQPNGAQDWRRADSLPRPQGITVQFAGRGSSEEARREALRKLGLLRESS.

Over residues 1–10 (MPVTHRKSDA) the composition is skewed to basic and acidic residues. Positions 1–22 (MPVTHRKSDASDMNSDTSPSCR) are disordered. At S8 the chain carries Phosphoserine. The segment covering 11–20 (SDMNSDTSPS) has biased composition (polar residues). At S43 the chain carries Phosphoserine. Position 45 is a phosphothreonine (T45). Composition is skewed to low complexity over residues 92–102 (PSLEESTSSPS) and 113–126 (PAPG…LPEG). 2 disordered regions span residues 92–276 (PSLE…RAAV) and 295–420 (AFPA…SEEA). T146 is subject to Phosphothreonine. Positions 146 to 169 (TPPPPDPPAPETLLAPPPLPSTPD) are enriched in pro residues. Phosphoserine is present on S166. T167 carries the post-translational modification Phosphothreonine. 3 positions are modified to phosphoserine: S179, S212, and S215. Residues 228–237 (PAARGPRSGD) show a composition bias toward low complexity. R252 bears the Asymmetric dimethylarginine; alternate mark. R252 bears the Omega-N-methylarginine; alternate mark. Over residues 302–311 (AGEGAPGGGS) the composition is skewed to gly residues. S312 is modified (phosphoserine). Residue R320 is modified to Omega-N-methylarginine; alternate. R320 carries the dimethylated arginine; alternate modification. The residue at position 378 (R378) is an Omega-N-methylarginine. A Phosphoserine modification is found at S400. Omega-N-methylarginine is present on R414.

This is Proline and serine-rich protein 2 (PROSER2) from Homo sapiens (Human).